The primary structure comprises 95 residues: Aspartyl/glutamyl-tRNA(Asn/Gln) amidotransferase subunit C (95 aa).

This sequence belongs to the GatC family. In terms of assembly, heterotrimer of A, B and C subunits.

It catalyses the reaction L-glutamyl-tRNA(Gln) + L-glutamine + ATP + H2O = L-glutaminyl-tRNA(Gln) + L-glutamate + ADP + phosphate + H(+). It carries out the reaction L-aspartyl-tRNA(Asn) + L-glutamine + ATP + H2O = L-asparaginyl-tRNA(Asn) + L-glutamate + ADP + phosphate + 2 H(+). Functionally, allows the formation of correctly charged Asn-tRNA(Asn) or Gln-tRNA(Gln) through the transamidation of misacylated Asp-tRNA(Asn) or Glu-tRNA(Gln) in organisms which lack either or both of asparaginyl-tRNA or glutaminyl-tRNA synthetases. The reaction takes place in the presence of glutamine and ATP through an activated phospho-Asp-tRNA(Asn) or phospho-Glu-tRNA(Gln). The chain is Aspartyl/glutamyl-tRNA(Asn/Gln) amidotransferase subunit C from Hyphomonas neptunium (strain ATCC 15444).